A 311-amino-acid polypeptide reads, in one-letter code: JNK1/MAPK8-associated membrane protein (311 aa).

Residues methionine 1–aspartate 57 lie on the Lumenal side of the membrane. The N-linked (GlcNAc...) asparagine glycan is linked to asparagine 22. Residues tryptophan 58 to tryptophan 78 traverse the membrane as a helical segment. Residues tyrosine 79 to alanine 87 are Cytoplasmic-facing. The chain crosses the membrane as a helical span at residues leucine 88–valine 108. Residues serine 109 to alanine 149 are Lumenal-facing. The helical transmembrane segment at valine 150–leucine 170 threads the bilayer. Over leucine 171 to arginine 188 the chain is Cytoplasmic. Residues phenylalanine 189–glycine 209 form a helical membrane-spanning segment. Residue glycine 210 is a topological domain, lumenal. A helical transmembrane segment spans residues glycine 211–valine 231. Over tyrosine 232 to arginine 250 the chain is Cytoplasmic. Residues leucine 251–valine 271 traverse the membrane as a helical segment. Topologically, residues aspartate 272–aspartate 277 are lumenal. A helical transmembrane segment spans residues leucine 278 to threonine 298. Over glutamate 299–histidine 311 the chain is Cytoplasmic.

As to quaternary structure, interacts with RNF5 and MAPK8, but not with MAPK9. Binding to MAPK8 occurs before and after exposure to stress, such as UV irradiation. After exposure to stress, interacts with phosphorylated MAPK8. Competes with DUSP10 for MAPK8 binding. Associates with multiple components of the proteasome and with ERAD regulatory proteins, including AMFR/GP78, CANX, PSMC1, PSMC2, PSMC3/TBP1, PSMC5, PSMC6, PSMD8, SEC61-ALPHA and UFD1. Post-translationally, ubiquitinated by RNF5 via 'Lys-63'-linked ubiquitin linkage in a UBE2N-dependent manner. Ubiquitination decreases association with components of the proteasome and ERAD. In terms of tissue distribution, expressed in numerous tissues, including brain, spleen, thymus, liver, kidney and testis.

The protein resides in the endoplasmic reticulum membrane. Regulates the duration of MAPK8 activity in response to various stress stimuli. Facilitates degradation of misfolded endoplasmic reticulum (ER) proteins through the recruitment of components of the proteasome and endoplasmic reticulum-associated degradation (ERAD) system. The sequence is that of JNK1/MAPK8-associated membrane protein (Jkamp) from Mus musculus (Mouse).